We begin with the raw amino-acid sequence, 407 residues long: Amylovoran biosynthesis glycosyltransferase AmsK (407 aa).

Belongs to the glycosyltransferase group 1 family. Glycosyltransferase 4 subfamily.

It participates in glycan metabolism; exopolysaccharide biosynthesis. Its function is as follows. Involved in the biosynthesis of amylovoran which functions as a virulence factor. The sequence is that of Amylovoran biosynthesis glycosyltransferase AmsK (amsK) from Erwinia amylovora (Fire blight bacteria).